We begin with the raw amino-acid sequence, 206 residues long: Large ribosomal subunit protein bL25 (206 aa).

It belongs to the bacterial ribosomal protein bL25 family. CTC subfamily. Part of the 50S ribosomal subunit; part of the 5S rRNA/L5/L18/L25 subcomplex. Contacts the 5S rRNA. Binds to the 5S rRNA independently of L5 and L18.

This is one of the proteins that binds to the 5S RNA in the ribosome where it forms part of the central protuberance. The sequence is that of Large ribosomal subunit protein bL25 from Paraburkholderia phytofirmans (strain DSM 17436 / LMG 22146 / PsJN) (Burkholderia phytofirmans).